The primary structure comprises 193 residues: GTP cyclohydrolase-2 (193 aa).

45 to 49 (RIHSE) is a GTP binding site. Zn(2+)-binding residues include Cys-50, Cys-61, and Cys-63. GTP contacts are provided by residues Gln-66, 87 to 89 (EGR), and Thr-109. The active-site Proton acceptor is the Asp-121. Residue Arg-123 is the Nucleophile of the active site. GTP contacts are provided by Thr-144 and Lys-149.

Belongs to the GTP cyclohydrolase II family. Zn(2+) serves as cofactor.

It carries out the reaction GTP + 4 H2O = 2,5-diamino-6-hydroxy-4-(5-phosphoribosylamino)-pyrimidine + formate + 2 phosphate + 3 H(+). Its pathway is cofactor biosynthesis; riboflavin biosynthesis; 5-amino-6-(D-ribitylamino)uracil from GTP: step 1/4. Its function is as follows. Catalyzes the conversion of GTP to 2,5-diamino-6-ribosylamino-4(3H)-pyrimidinone 5'-phosphate (DARP), formate and pyrophosphate. The polypeptide is GTP cyclohydrolase-2 (Campylobacter hominis (strain ATCC BAA-381 / DSM 21671 / CCUG 45161 / LMG 19568 / NCTC 13146 / CH001A)).